Consider the following 270-residue polypeptide: Probable feruloyl esterase C (270 aa).

The signal sequence occupies residues 1-21 (MIKSIILQAIMVLSTLTSVHG). N-linked (GlcNAc...) asparagine glycosylation occurs at Asn23.

The protein belongs to the faeC family.

Its subcellular location is the secreted. It carries out the reaction feruloyl-polysaccharide + H2O = ferulate + polysaccharide.. Its function is as follows. Involved in degradation of plant cell walls. Hydrolyzes the feruloyl-arabinose ester bond in arabinoxylans, and the feruloyl-galactose ester bond in pectin. Active against paranitrophenyl-acetate, methyl ferulate and wheat arabinoxylan. The protein is Probable feruloyl esterase C (faeC) of Aspergillus oryzae (strain ATCC 42149 / RIB 40) (Yellow koji mold).